We begin with the raw amino-acid sequence, 549 residues long: Hydroxylamine reductase (549 aa).

Positions 3, 6, 15, and 21 each coordinate [4Fe-4S] cluster. H244, E268, C313, C405, C433, C458, E492, and K494 together coordinate hybrid [4Fe-2O-2S] cluster. Position 405 is a cysteine persulfide (C405).

This sequence belongs to the HCP family. Requires [4Fe-4S] cluster as cofactor. Hybrid [4Fe-2O-2S] cluster is required as a cofactor.

The protein resides in the cytoplasm. It catalyses the reaction A + NH4(+) + H2O = hydroxylamine + AH2 + H(+). In terms of biological role, catalyzes the reduction of hydroxylamine to form NH(3) and H(2)O. This is Hydroxylamine reductase from Crocosphaera subtropica (strain ATCC 51142 / BH68) (Cyanothece sp. (strain ATCC 51142)).